A 410-amino-acid chain; its full sequence is Peptidase T (410 aa).

His-79 contacts Zn(2+). Asp-81 is a catalytic residue. Asp-142 lines the Zn(2+) pocket. Catalysis depends on Glu-176, which acts as the Proton acceptor. Zn(2+)-binding residues include Glu-177, Asp-199, and His-381.

It belongs to the peptidase M20B family. Requires Zn(2+) as cofactor.

It localises to the cytoplasm. The catalysed reaction is Release of the N-terminal residue from a tripeptide.. Functionally, cleaves the N-terminal amino acid of tripeptides. This Bacillus thuringiensis (strain Al Hakam) protein is Peptidase T.